Here is a 463-residue protein sequence, read N- to C-terminus: MLKIFNTLTRQKEEFKPIHKGKIGMYVCGITIYDLCHIGHGRTFVAFDAITRYLRYLGYDVNYVRNVTDVDDKIIKRAIENNETCEQLTTRMLAEMHKDFDALNILRPDSEPRATHHIAEIIALTETLIKRGHAYVAENGDVMFAIDTDPDYGLLSRQDLEQLQAGARVEVANVKRNPMDFVLWKMSKPGEPSWTSPWGEGRPGWHIECSAMNGKELGHHFDIHGGGSDLMFPHHENEIAQSTCAHDGPYVNYWMHSGMVMVDKEKMSKSLNNFFTIRDVLAYYDAETVRYFLLSGHYRSQLNYTEENLKQARTALERLYTSLRGTDANAQPAGGEAFEAQFIEAMNDDFNTPEAYSVLFDLAREVNRLKTVNMEAANGLAAVLRKLAKVLGLLEQQPEHFLQSGAQADDADEVEKIEALIQQRNDARKNKDWAAADAARDALTAMGIVLEDGPQGTTWRRNS.

Cysteine 28 contacts Zn(2+). A 'HIGH' region motif is present at residues 30 to 40; that stretch reads ITIYDLCHIGH. 3 residues coordinate Zn(2+): cysteine 209, histidine 234, and glutamate 238. The 'KMSKS' region motif lies at 266 to 270; that stretch reads KMSKS. Lysine 269 is an ATP binding site.

Belongs to the class-I aminoacyl-tRNA synthetase family. As to quaternary structure, monomer. The cofactor is Zn(2+).

The protein localises to the cytoplasm. It catalyses the reaction tRNA(Cys) + L-cysteine + ATP = L-cysteinyl-tRNA(Cys) + AMP + diphosphate. This Proteus mirabilis (strain HI4320) protein is Cysteine--tRNA ligase.